The primary structure comprises 397 residues: Acetate kinase (397 aa).

A Mg(2+)-binding site is contributed by Asn-7. Lys-14 is an ATP binding site. Arg-90 lines the substrate pocket. Asp-147 (proton donor/acceptor) is an active-site residue. ATP contacts are provided by residues 207–211 (HLGNG), 282–284 (DFR), and 330–334 (GLGEN). Glu-383 serves as a coordination point for Mg(2+).

The protein belongs to the acetokinase family. Homodimer. It depends on Mg(2+) as a cofactor. Mn(2+) serves as cofactor.

The protein localises to the cytoplasm. It carries out the reaction acetate + ATP = acetyl phosphate + ADP. It functions in the pathway metabolic intermediate biosynthesis; acetyl-CoA biosynthesis; acetyl-CoA from acetate: step 1/2. Catalyzes the formation of acetyl phosphate from acetate and ATP. Can also catalyze the reverse reaction. The sequence is that of Acetate kinase from Clostridium botulinum (strain ATCC 19397 / Type A).